Consider the following 1012-residue polypeptide: Probable inorganic carbon transporter subunit DabA (1012 aa).

The Zn(2+) site is built by C489, D491, H679, and C694.

Belongs to the inorganic carbon transporter (TC 9.A.2) DabA family. As to quaternary structure, forms a complex with DabB. The cofactor is Zn(2+).

It is found in the cell inner membrane. Part of an energy-coupled inorganic carbon pump. This Dechloromonas aromatica (strain RCB) protein is Probable inorganic carbon transporter subunit DabA.